A 506-amino-acid chain; its full sequence is Dipeptide and tripeptide permease A (506 aa).

Residues 1–36 are Cytoplasmic-facing; it reads MSTANNNSEHPESVSLNAFKQPKAFYLIFSIELWER. Residues 37 to 57 form a helical membrane-spanning segment; sequence FGYYGLQGIMAVYLVKMLGLS. Over 58–61 the chain is Periplasmic; that stretch reads EADS. A helical membrane pass occupies residues 62 to 82; sequence ITLFSSFSALVYGFVAIGGWL. At 83–91 the chain is on the cytoplasmic side; it reads GDKVLGSKR. The next 2 helical transmembrane spans lie at 92-112 and 113-133; these read VIVLGALVLAVGYAMVAYSGH and EIFWVYLGMATIAVGSGLFKA. Topologically, residues 134-155 are cytoplasmic; it reads NPSSLLSTCYEKDDPRLDGAFT. The chain crosses the membrane as a helical span at residues 156 to 176; it reads MYYMSVNIGSFLSMLATPWLA. Residues 177–180 lie on the Periplasmic side of the membrane; the sequence is AKYG. Residues 181–201 form a helical membrane-spanning segment; sequence WSVAFSLSVVGMLITLVNFMV. The Cytoplasmic portion of the chain corresponds to 202-222; that stretch reads CHKWVKQHGSKPDFKPLQVKK. Residues 223–243 form a helical membrane-spanning segment; sequence LLMVLVGVVALVALSSWLLHN. Residues 244 to 248 are Periplasmic-facing; sequence QIIAR. The helical transmembrane segment at 249–269 threads the bilayer; it reads WALAIVSIGIVIVFAKETFAL. At 270-276 the chain is on the cytoplasmic side; it reads HGAARRK. A helical transmembrane segment spans residues 277-297; the sequence is MIVAFLLMLEAVVFFVLYSQM. The Periplasmic portion of the chain corresponds to 298 to 322; it reads PTSLNFFAIHNVEHNILGLAFEPEQ. The helical transmembrane segment at 323–343 threads the bilayer; sequence YQALNPFWIMLASPILAALYN. The Cytoplasmic portion of the chain corresponds to 344-354; that stretch reads KMGDRLPMPHK. A helical membrane pass occupies residues 355–375; the sequence is FAFGMILCSGAFLVLPWGASF. At 376–385 the chain is on the periplasmic side; the sequence is ANEQGIVSVN. The helical transmembrane segment at 386–406 threads the bilayer; sequence WLILSYALQSIGELMISGLGL. The Cytoplasmic portion of the chain corresponds to 407–416; it reads AMVAQLVPQR. The chain crosses the membrane as a helical span at residues 417–437; that stretch reads LMGFIMGSWFLTTAAAALIAG. At 438-461 the chain is on the periplasmic side; that stretch reads KVAGLTAVPGDVNDAHASLAIYSH. A helical transmembrane segment spans residues 462–482; sequence VFMQIGIATAVIAILMMLTAP. Residues 483–506 lie on the Cytoplasmic side of the membrane; sequence KLHRMTLDTAEDTEKKAQAAAITN.

The protein belongs to the major facilitator superfamily. Proton-dependent oligopeptide transporter (POT/PTR) (TC 2.A.17) family. DtpA subfamily.

Its subcellular location is the cell inner membrane. Proton-dependent permease that transports di- and tripeptides. The protein is Dipeptide and tripeptide permease A of Serratia proteamaculans (strain 568).